Reading from the N-terminus, the 161-residue chain is Protein ZMO0507 (161 aa).

It belongs to the free Met sulfoxide reductase family.

This Zymomonas mobilis subsp. mobilis (strain ATCC 31821 / ZM4 / CP4) protein is Protein ZMO0507.